We begin with the raw amino-acid sequence, 354 residues long: MELGLSLGDAVTVADGGRLELVLGLGVGVGAGVRRGEEEERGRREDVVGAGRWAAMAAASPEPSVRLSLVSSLGLHWPSETGRSEAAARGFDVNRAPSVAAGAPGMEDDEEGPGAAPALSSSPNDSGGSFPLDLSGHGLRGHAEAAAQGGGGGGGGERSSSRASDDDEGASARKKLRLSKEQSAFLEESFKEHSTLNPKQKVALAKQLNLRPRQVEVWFQNRRARTKLKQTEVDCEYLKRCCETLTEENRRLHKELAELRALKTARPFYMHLPATTLSMCPSCERVASNPATASTSAPAAATSPAAAPTAAARTAVASPEPHRPSSFAALFAAPLGFPLTAAQPRPPPPASNCL.

The segment at 98-175 (SVAAGAPGME…DDEGASARKK (78 aa)) is disordered. Positions 148 to 157 (QGGGGGGGGE) are enriched in gly residues. Positions 171-230 (SARKKLRLSKEQSAFLEESFKEHSTLNPKQKVALAKQLNLRPRQVEVWFQNRRARTKLKQ) form a DNA-binding region, homeobox. Residues 229-273 (KQTEVDCEYLKRCCETLTEENRRLHKELAELRALKTARPFYMHLP) are leucine-zipper. Residues 294-323 (STSAPAAATSPAAAPTAAARTAVASPEPHR) form a disordered region.

This sequence belongs to the HD-ZIP homeobox family. Class II subfamily. In terms of tissue distribution, expressed in seedlings, roots, stems, leaf sheaths and blades and panicles.

The protein localises to the nucleus. In terms of biological role, probable transcription factor. This chain is Homeobox-leucine zipper protein HOX27 (HOX27), found in Oryza sativa subsp. indica (Rice).